The following is a 440-amino-acid chain: Beta-1,3-galactosyl-O-glycosyl-glycoprotein beta-1,6-N-acetylglucosaminyltransferase 3 (440 aa).

The Cytoplasmic portion of the chain corresponds to 1-12 (MKMTGWKKKLCR). A helical; Signal-anchor for type II membrane protein membrane pass occupies residues 13-30 (GHHLWALGCYSLLAVVAL). At 31-440 (RLSLRLKCDV…RHKAIYGTEL (410 aa)) the chain is on the lumenal side. 4 cysteine pairs are disulfide-bonded: Cys73–Cys230, Cys164–Cys384, Cys185–Cys212, and Cys393–Cys425. Residue Asn108 is glycosylated (N-linked (GlcNAc...) asparagine).

This sequence belongs to the glycosyltransferase 14 family. In terms of processing, N-glycosylated.

It localises to the golgi apparatus membrane. It carries out the reaction a 3-O-[beta-D-galactosyl-(1-&gt;3)-N-acetyl-alpha-D-galactosaminyl]-L-seryl-[protein] + UDP-N-acetyl-alpha-D-glucosamine = 3-O-{beta-D-galactosyl-(1-&gt;3)-[N-acetyl-beta-D-glucosaminyl-(1-&gt;6)]-N-acetyl-alpha-D-galactosaminyl}-L-seryl-[protein] + UDP + H(+). The catalysed reaction is a 3-O-[beta-D-galactosyl-(1-&gt;3)-N-acetyl-alpha-D-galactosaminyl]-L-threonyl-[protein] + UDP-N-acetyl-alpha-D-glucosamine = a 3-O-{beta-D-galactosyl-(1-&gt;3)-[N-acetyl-beta-D-glucosaminyl-(1-&gt;6)]-N-acetyl-alpha-D-galactosaminyl}-L-threonyl-[protein] + UDP + H(+). It catalyses the reaction a beta-D-Gal-(1-&gt;4)-beta-D-GlcNAc-(1-&gt;3)-beta-D-Gal-(1-&gt;4)-beta-D-GlcNAc derivative + UDP-N-acetyl-alpha-D-glucosamine = a beta-D-Gal-(1-&gt;4)-beta-D-GlcNAc-(1-&gt;3)-[beta-D-GlcNAc-(1-&gt;6)]-beta-D-Gal-(1-&gt;4)-N-acetyl-beta-D-glucosaminyl derivative + UDP + H(+). The enzyme catalyses 3-O-[N-acetyl-beta-D-glucosaminyl-(1-&gt;3)-N-acetyl-alpha-D-galactosaminyl]-L-seryl-[protein] + UDP-N-acetyl-alpha-D-glucosamine = 3-O-[N-acetyl-beta-D-glucosaminyl-(1-&gt;3)-[N-acetyl-beta-D-glucosaminyl-(1-&gt;6)]-N-acetyl-alpha-D-galactosaminyl]-L-seryl-[protein] + UDP + H(+). It carries out the reaction a 3-O-[N-acetyl-beta-D-glucosaminyl-(1-&gt;3)-N-acetyl-alpha-D-galactosaminyl]-L-threonyl-[protein] + UDP-N-acetyl-alpha-D-glucosamine = 3-O-[N-acetyl-beta-D-glucosaminyl-(1-&gt;3)-[N-acetyl-beta-D-glucosaminyl-(1-&gt;6)]-N-acetyl-alpha-D-galactosaminyl]-L-threonyl-[protein] + UDP + H(+). The protein operates within protein modification; protein glycosylation. Glycosyltransferase that can synthesize all known mucin beta 6 N-acetylglucosaminides. Mediates core 2 and core 4 O-glycan branching, 2 important steps in mucin-type biosynthesis. Also has I-branching enzyme activity by converting linear into branched poly-N-acetyllactosaminoglycans, leading to introduce the blood group I antigen during embryonic development. The polypeptide is Beta-1,3-galactosyl-O-glycosyl-glycoprotein beta-1,6-N-acetylglucosaminyltransferase 3 (GCNT3) (Bos mutus grunniens (Wild yak)).